The sequence spans 289 residues: N-acetylmuramoyl-L-alanine amidase AmiA (289 aa).

Residues Met1–Ala34 constitute a signal peptide (tat-type signal). Residues Leu39–Pro63 are disordered. Over residues Ser46–Gly55 the composition is skewed to basic residues. The MurNAc-LAA domain occupies Val59–Ile273.

Belongs to the N-acetylmuramoyl-L-alanine amidase 3 family. Exported by the Tat system. The position of the signal peptide cleavage has not been experimentally proven. Can also be exported by the Sec system.

The protein resides in the periplasm. It carries out the reaction Hydrolyzes the link between N-acetylmuramoyl residues and L-amino acid residues in certain cell-wall glycopeptides.. Its function is as follows. Cell-wall hydrolase involved in septum cleavage during cell division. Can also act as powerful autolysin in the presence of murein synthesis inhibitors. This is N-acetylmuramoyl-L-alanine amidase AmiA (amiA) from Escherichia coli (strain K12).